The chain runs to 212 residues: MQLFHLCLIISCSCPTVQASKLCLGWLWGMDIDPYKEFGASVELLSFLPSDFFPSIRDLLDTASALYREALESPEHCSPHHTALRQAILCWGELMNLATWVGSNLEDPASRELVVSYVNVNMGLKIRQLLWFHVSCLTFGRETVLEYLVSFGVWIRTPPAYRPPNAPILSTLPETTVVRRRGRSPRRRTPSPRRRRSQSPRRRRSQSRESQC.

The first 19 residues, 1-19 (MQLFHLCLIISCSCPTVQA), serve as a signal peptide directing secretion. The HBEAG stretch occupies residues 25 to 27 (GWL). The disordered stretch occupies residues 165–212 (NAPILSTLPETTVVRRRGRSPRRRTPSPRRRRSQSPRRRRSQSRESQC). Residues 178–205 (VRRRGRSPRRRTPSPRRRRSQSPRRRRS) show a composition bias toward basic residues. The stretch at 184-190 (SPRRRTP) is one 1; half-length repeat. Residues 184–206 (SPRRRTPSPRRRRSQSPRRRRSQ) form a 3 X 8 AA repeats of S-P-R-R-R-R-S-Q region. A propeptide spanning residues 184-212 (SPRRRTPSPRRRRSQSPRRRRSQSRESQC) is cleaved from the precursor. Tandem repeats lie at residues 191–198 (SPRRRRSQ) and 199–206 (SPRRRRSQ).

The protein belongs to the orthohepadnavirus precore antigen family. As to quaternary structure, homodimerizes. Post-translationally, phosphorylated. In terms of processing, cleaved by host furin.

It is found in the secreted. The protein resides in the host nucleus. Its function is as follows. May regulate immune response to the intracellular capsid in acting as a T-cell tolerogen, by having an immunoregulatory effect which prevents destruction of infected cells by cytotoxic T-cells. This immune regulation may predispose to chronicity during perinatal infections and prevent severe liver injury during adult infections. This is External core antigen from Homo sapiens (Human).